We begin with the raw amino-acid sequence, 145 residues long: uncharacterized protein (145 aa).

The tract at residues 95–119 is disordered; sequence YVDSTSRTPSAKKDMQGLSVSEKQT.

This is an uncharacterized protein from Treponema pallidum (strain Nichols).